Consider the following 246-residue polypeptide: MQHQDVAIIIPSRLSSTRLKQKPLQLIGSTTLIERVFKQVNQANLEHTYVATDSEEIANIIKKVGGKVIFTDSAIPTGTDRTYEAFKLIPNNQNINYIVNVQGDMPFIEPSSILKIIEYLKNSEYDIVTPVVKVDRESVEASSNVTVAVDSAGKALYFSRSLIPNGAEKFLYHVGMYGFRKNALEKFVSLKPTFLEKTERLEQLRVLENGMTIGTCLVENVPISVDTEDDLKKAVKFYENISKLGL.

It belongs to the KdsB family.

It localises to the cytoplasm. The enzyme catalyses 3-deoxy-alpha-D-manno-oct-2-ulosonate + CTP = CMP-3-deoxy-beta-D-manno-octulosonate + diphosphate. The protein operates within nucleotide-sugar biosynthesis; CMP-3-deoxy-D-manno-octulosonate biosynthesis; CMP-3-deoxy-D-manno-octulosonate from 3-deoxy-D-manno-octulosonate and CTP: step 1/1. Its pathway is bacterial outer membrane biogenesis; lipopolysaccharide biosynthesis. Activates KDO (a required 8-carbon sugar) for incorporation into bacterial lipopolysaccharide in Gram-negative bacteria. This is 3-deoxy-manno-octulosonate cytidylyltransferase from Rickettsia felis (strain ATCC VR-1525 / URRWXCal2) (Rickettsia azadi).